A 130-amino-acid chain; its full sequence is MAKKIEKSAKKKFREKVLLGVAHIQSTFNNTIVTITTNKGNVLAWSSAGACGFKGARKKTPLAAKQAAENAAQTCVSQGMREIRVNVKGAGAGREAALRGLRDAGLNITIIRDITPIPHNGCRPPKKRRI.

Belongs to the universal ribosomal protein uS11 family. In terms of assembly, part of the 30S ribosomal subunit.

Its subcellular location is the plastid. It is found in the chloroplast. This Chlorella vulgaris (Green alga) protein is Small ribosomal subunit protein uS11c.